The primary structure comprises 238 residues: Purine nucleoside phosphorylase DeoD-type (238 aa).

H4 serves as a coordination point for a purine D-ribonucleoside. Phosphate is bound by residues G20, R24, R43, and 87-90 (RVGS). A purine D-ribonucleoside-binding positions include 179-181 (EME) and 203-204 (SD). The active-site Proton donor is the D204.

Belongs to the PNP/UDP phosphorylase family. As to quaternary structure, homohexamer; trimer of homodimers.

It carries out the reaction a purine D-ribonucleoside + phosphate = a purine nucleobase + alpha-D-ribose 1-phosphate. The catalysed reaction is a purine 2'-deoxy-D-ribonucleoside + phosphate = a purine nucleobase + 2-deoxy-alpha-D-ribose 1-phosphate. Functionally, catalyzes the reversible phosphorolytic breakdown of the N-glycosidic bond in the beta-(deoxy)ribonucleoside molecules, with the formation of the corresponding free purine bases and pentose-1-phosphate. This is Purine nucleoside phosphorylase DeoD-type from Histophilus somni (strain 2336) (Haemophilus somnus).